Consider the following 160-residue polypeptide: Cyanate hydratase (160 aa).

Active-site residues include Arg-100, Glu-103, and Ser-126.

It belongs to the cyanase family.

The enzyme catalyses cyanate + hydrogencarbonate + 3 H(+) = NH4(+) + 2 CO2. Catalyzes the reaction of cyanate with bicarbonate to produce ammonia and carbon dioxide. This chain is Cyanate hydratase, found in Emericella nidulans (strain FGSC A4 / ATCC 38163 / CBS 112.46 / NRRL 194 / M139) (Aspergillus nidulans).